Consider the following 130-residue polypeptide: Peptide methionine sulfoxide reductase MsrB (130 aa).

The MsrB domain maps to 1–122; the sequence is MKKREDMTEM…NSVSMAFEDS (122 aa). Positions 39, 42, 88, and 91 each coordinate Zn(2+). The active-site Nucleophile is Cys111.

This sequence belongs to the MsrB Met sulfoxide reductase family. Zn(2+) is required as a cofactor.

It catalyses the reaction L-methionyl-[protein] + [thioredoxin]-disulfide + H2O = L-methionyl-(R)-S-oxide-[protein] + [thioredoxin]-dithiol. The sequence is that of Peptide methionine sulfoxide reductase MsrB from Pasteurella multocida (strain Pm70).